We begin with the raw amino-acid sequence, 160 residues long: RTX-II toxin-activating lysine-acyltransferase ApxIIC (160 aa).

Active-site residues include H23 and D92.

The protein belongs to the RTX toxin acyltransferase family. Homodimer.

Its subcellular location is the cytoplasm. The catalysed reaction is a fatty acyl-[ACP] + L-lysyl-[protein] = N(6)-(fatty acyl)-L-lysyl-[protein] + holo-[ACP] + H(+). Protein-lysine acyltransferase that catalyzes fatty acylation of the protoxin, thereby converting it to the active toxin. The sequence is that of RTX-II toxin-activating lysine-acyltransferase ApxIIC (apxIIC) from Actinobacillus pleuropneumoniae (Haemophilus pleuropneumoniae).